Here is a 400-residue protein sequence, read N- to C-terminus: Cytochrome b (400 aa).

A run of 4 helical transmembrane segments spans residues 32–52 (FGSL…TLAM), 76–98 (WLIR…LHIG), 113–133 (TWSI…LGYV), and 179–199 (FFSL…MHLI). Heme b is bound by residues histidine 82 and histidine 96. Positions 183 and 197 each coordinate heme b. Histidine 202 contacts a ubiquinone. Transmembrane regions (helical) follow at residues 226–246 (YLFK…IFVF), 290–310 (AVGV…PYLD), 322–342 (LSKV…QLGA), and 349–369 (FIVF…IIIP).

It belongs to the cytochrome b family. In terms of assembly, fungal cytochrome b-c1 complex contains 10 subunits; 3 respiratory subunits, 2 core proteins and 5 low-molecular weight proteins. Cytochrome b-c1 complex is a homodimer. It depends on heme b as a cofactor.

The protein localises to the mitochondrion inner membrane. Component of the ubiquinol-cytochrome c reductase complex (complex III or cytochrome b-c1 complex) that is part of the mitochondrial respiratory chain. The b-c1 complex mediates electron transfer from ubiquinol to cytochrome c. Contributes to the generation of a proton gradient across the mitochondrial membrane that is then used for ATP synthesis. The polypeptide is Cytochrome b (cob) (Epidermophyton floccosum).